Reading from the N-terminus, the 231-residue chain is Protein N-terminal glutamine amidohydrolase (231 aa).

The interval 1–21 (MADDRVAGGATPPPPPPPPPL) is disordered. Residues 11-21 (TPPPPPPPPPL) are compositionally biased toward pro residues. Residues C33, H89, and D108 contribute to the active site.

This sequence belongs to the NTAQ1 family. As to quaternary structure, monomer.

The enzyme catalyses N-terminal L-glutaminyl-[protein] + H2O = N-terminal L-glutamyl-[protein] + NH4(+). Mediates the side-chain deamidation of N-terminal glutamine residues to glutamate, an important step in N-end rule pathway of protein degradation. Conversion of the resulting N-terminal glutamine to glutamate renders the protein susceptible to arginylation, polyubiquitination and degradation as specified by the N-end rule. Does not act on substrates with internal or C-terminal glutamine and does not act on non-glutamine residues in any position. The polypeptide is Protein N-terminal glutamine amidohydrolase (Oryza sativa subsp. indica (Rice)).